The following is a 729-amino-acid chain: Cytoplasmic polyadenylation element-binding protein 4 (729 aa).

2 disordered regions span residues 20 to 49 (FPVR…NNNT) and 78 to 133 (EKAK…KEKI). Positions 24–35 (FHPHLQPPHHHQ) are enriched in basic residues. A compositionally biased stretch (low complexity) spans 83 to 96 (QQQEQQDPLEKQQL). S97, S99, and S137 each carry phosphoserine. Positions 218 to 328 (FGGSFSPQIG…RGLNGGITPL (111 aa)) are disordered. Residues 232–249 (HHPHHPHFQHHHSQHQQQ) are compositionally biased toward basic residues. 2 positions are modified to phosphoserine: S252 and S255. The span at 285 to 300 (WSSYQSPSPTPSSSWS) shows a compositional bias: low complexity. The span at 301–313 (PGGGGYGGWGGSQ) shows a compositional bias: gly residues. T326 carries the phosphothreonine modification. Phosphoserine is present on residues S330 and S332. RRM domains are found at residues 472-563 (RKVF…PWNL) and 580-662 (KTIF…PYVL). The segment at 541–543 (KLY) is RNA-binding. Positions 667, 675, 684, 689, 694, 697, 702, and 710 each coordinate Zn(2+).

It belongs to the RRM CPEB family. In terms of assembly, interacts with TOB1. In terms of tissue distribution, expressed in pancreas in islets and ductal cells (at protein level). Expressed in melanocytes.

Its subcellular location is the cytoplasm. It is found in the cell projection. The protein resides in the dendrite. The protein localises to the dendritic spine. It localises to the postsynaptic density. Its subcellular location is the axon. It is found in the growth cone. The protein resides in the endoplasmic reticulum. The protein localises to the perinuclear region. In terms of biological role, sequence-specific RNA-binding protein that binds to the cytoplasmic polyadenylation element (CPE), an uridine-rich sequence element (consensus sequence 5'-UUUUUAU-3') within the mRNA 3'-UTR. RNA binding results in a clear conformational change analogous to the Venus fly trap mechanism. Regulates activation of unfolded protein response (UPR) in the process of adaptation to ER stress in liver, by maintaining translation of CPE-regulated mRNAs in conditions in which global protein synthesis is inhibited. Required for cell cycle progression, specifically for cytokinesis and chromosomal segregation. Plays a role as an oncogene promoting tumor growth and progression by positively regulating translation of t-plasminogen activator/PLAT. Stimulates proliferation of melanocytes. In contrast to CPEB1 and CPEB3, does not play role in synaptic plasticity, learning and memory. In Homo sapiens (Human), this protein is Cytoplasmic polyadenylation element-binding protein 4 (CPEB4).